A 474-amino-acid polypeptide reads, in one-letter code: Glutathione synthetase (474 aa).

Ala2 is modified (N-acetylalanine). Arg125 contributes to the substrate binding site. Glu144 serves as a coordination point for ATP. The Mg(2+) site is built by Glu144 and Asn146. Substrate-binding positions include 148 to 151, 214 to 216, Gln220, and 267 to 270; these read VSAS, ERN, and RDGY. ATP contacts are provided by residues Lys305, 364–373, Tyr375, and 398–401; these read KPQREGGGNN and MEKI. Residue Glu368 coordinates Mg(2+). Position 415 is a phosphoserine (Ser415). Glu425 lines the ATP pocket. Arg450 is a binding site for substrate. Lys452 and Asp458 together coordinate ATP. Residue 461 to 462 coordinates substrate; it reads VA.

It belongs to the eukaryotic GSH synthase family. In terms of assembly, homodimer. Mg(2+) serves as cofactor.

It carries out the reaction gamma-L-glutamyl-L-cysteine + glycine + ATP = glutathione + ADP + phosphate + H(+). The catalysed reaction is gamma-L-glutamyl-(2S)-2-aminobutanoate + glycine + ATP = ophthalmate + ADP + phosphate + H(+). Its pathway is sulfur metabolism; glutathione biosynthesis; glutathione from L-cysteine and L-glutamate: step 2/2. Its function is as follows. Catalyzes the production of glutathione from gamma-glutamylcysteine and glycine in an ATP-dependent manner. Glutathione (gamma-glutamylcysteinylglycine, GSH) is the most abundant intracellular thiol in living aerobic cells and is required for numerous processes including the protection of cells against oxidative damage, amino acid transport, the detoxification of foreign compounds, the maintenance of protein sulfhydryl groups in a reduced state and acts as a cofactor for a number of enzymes. Participates in ophthalmate biosynthesis in hepatocytes. This chain is Glutathione synthetase, found in Bos taurus (Bovine).